The following is a 243-amino-acid chain: Adenosine 5'-phosphosulfate reductase (243 aa).

[4Fe-4S] cluster contacts are provided by Cys-126, Cys-127, Cys-209, and Cys-212. The Nucleophile; cysteine thiosulfonate intermediate role is filled by Cys-235.

It belongs to the PAPS reductase family. CysH subfamily. It depends on [4Fe-4S] cluster as a cofactor.

The protein resides in the cytoplasm. The enzyme catalyses [thioredoxin]-disulfide + sulfite + AMP + 2 H(+) = adenosine 5'-phosphosulfate + [thioredoxin]-dithiol. The protein operates within sulfur metabolism; hydrogen sulfide biosynthesis; sulfite from sulfate. In terms of biological role, catalyzes the formation of sulfite from adenosine 5'-phosphosulfate (APS) using thioredoxin as an electron donor. This Staphylococcus epidermidis (strain ATCC 12228 / FDA PCI 1200) protein is Adenosine 5'-phosphosulfate reductase.